A 642-amino-acid chain; its full sequence is MSSTFRAPAGAATVFTADQKIRLGRLDALRSSHSVFLGRYGRGGVPVPPSASSSSSSPIQAVSTPAKPETATKRSKVEIIKEKSNFIRYPLNEELLTEAPNVNESAVQLIKFHGSYQQYNREERGGRSYSFMLRTKNPSGKVPNQLYLTMDDLADEFGIGTLRLTTRQTFQLHGVLKQNLKTVMSSIIKNMGSTLGACGDLNRNVLAPAAPYVKKDYLFAQETADNIAALLSPQSGFYYDMWVDGEQFMTAEPPEVVKARNDNSHGTNFVDSPEPIYGTQFLPRKFKVAVTVPTDNSVDLLTNDIGVVVVSDENGEPQGFNIYVGGGMGRTHRMESTFARLAEPIGYVPKEDILYAVKAIVVTQREHGRRDDRKYSRMKYLISSWGIEKFRDVVEQYYGKKFEPSRELPEWEFKSYLGWHEQGDGAWFCGLHVDSGRVGGIMKKTLREVIEKYKIDVRITPNQNIVLCDIKTEWKRPITTVLAQAGLLQPEFVDPLNQTAMACPAFPLCPLAITEAERGIPSILKRVRAMFEKVGLDYDESVVIRVTGCPNGCARPYMAELGLVGDGPNSYQVWLGGTPNLTQIARSFMDKVKVHDLEKVCEPLFYHWKLERQTKESFGEYTTRMGFEKLKELIDTYKGVSQ.

Residues 1–61 (MSSTFRAPAG…SSSSSSPIQA (61 aa)) constitute a chloroplast transit peptide. The segment at 46-74 (PVPPSASSSSSSPIQAVSTPAKPETATKR) is disordered. [4Fe-4S] cluster is bound by residues Cys-503, Cys-509, Cys-549, and Cys-553. A siroheme-binding site is contributed by Cys-553.

The protein belongs to the nitrite and sulfite reductase 4Fe-4S domain family. Monomer. Interacts with ferredoxin. Siroheme is required as a cofactor. The cofactor is [4Fe-4S] cluster. In terms of processing, phosphorylated; this phosphorylation reduces DNA-binding. Present in leaves and roots.

It localises to the plastid. The protein resides in the chloroplast stroma. It is found in the chloroplast nucleoid. The protein localises to the plastid stroma. The enzyme catalyses hydrogen sulfide + 6 oxidized [2Fe-2S]-[ferredoxin] + 3 H2O = sulfite + 6 reduced [2Fe-2S]-[ferredoxin] + 7 H(+). Functionally, essential protein with sulfite reductase activity required in assimilatory sulfate reduction pathway during both primary and secondary metabolism and thus involved in development and growth. In terms of biological role, DNA-binding protein that binds to both double-stranded and single-stranded DNA without significant sequence specificity to reversibly repress the transcriptional activity of chloroplast nucleoids by promoting DNA compaction and possibly regulate DNA replication. In Arabidopsis thaliana (Mouse-ear cress), this protein is Assimilatory sulfite reductase (ferredoxin), chloroplastic (SIR).